Consider the following 34-residue polypeptide: Trypsin inhibitor 2 (34 aa).

The cyclopeptide (Ser-Gly) cross-link spans 1–34; that stretch reads SGSDGGVCPKILKKCRRDSDCPGACICRGNGYCG. The (2-aminosuccinimidyl)acetic acid (Asp-Gly); alternate cross-link spans 4 to 5; sequence DG. Residues 4 to 5 constitute a cross-link (isoaspartyl glycine isopeptide (Asp-Gly); alternate); that stretch reads DG. Disulfide bonds link Cys-8–Cys-25, Cys-15–Cys-27, and Cys-21–Cys-33.

Post-translationally, a cyclic succinimide probably forms by loss of water between Asp-4 and Gly-5, that can then rehydrate to either the original peptide bond or to a beta-aspartyl isopeptide bond. Three isoforms of MCoTI-II are detected, two with the parent molecular weight, corresponding to the unmodified and proposed isopeptide forms, and one with a molecular weight 18 Da lower, corresponding to a succinimide cross-linked form. This is a cyclic peptide.

The protein localises to the secreted. Inhibits trypsin; probably participates in a plant defense mechanism. In Momordica cochinchinensis (Spiny bitter cucumber), this protein is Trypsin inhibitor 2.